The sequence spans 829 residues: Leucine--tRNA ligase (829 aa).

The 'HIGH' region motif lies at 42-52 (PYPSGRIHMGH). Residues 584–588 (KMSKS) carry the 'KMSKS' region motif. Lys587 contributes to the ATP binding site.

The protein belongs to the class-I aminoacyl-tRNA synthetase family.

Its subcellular location is the cytoplasm. It catalyses the reaction tRNA(Leu) + L-leucine + ATP = L-leucyl-tRNA(Leu) + AMP + diphosphate. This is Leucine--tRNA ligase from Syntrophobacter fumaroxidans (strain DSM 10017 / MPOB).